We begin with the raw amino-acid sequence, 238 residues long: Neuromodulin (238 aa).

Positions 1–238 (MLCCMRRTKQ…EEPEADQEHA (238 aa)) are disordered. 2 S-palmitoyl cysteine lipidation sites follow: Cys-3 and Cys-4. Residues 9–32 (KQVEKNDDDQKIEQDGIKPEDKAH) show a composition bias toward basic and acidic residues. The 30-residue stretch at 31-60 (AHKAATKIQASFRGHITRKKLKGEKKDDVQ) folds into the IQ domain. At Ser-41 the chain carries Phosphoserine; by PHK and PKC. Basic and acidic residues predominate over residues 54–83 (EKKDDVQAAEAEANKKDEAPVADGVEKKGE). Positions 84–95 (GTTTAEAAPATG) are enriched in low complexity. The segment covering 97–116 (KPDEPGKAGETPSEEKKGEG) has biased composition (basic and acidic residues). Residues 119 to 130 (ATEQAAPQAPAS) show a composition bias toward low complexity. Over residues 139–154 (ETESATKASTDNSPSS) the composition is skewed to polar residues. Phosphoserine occurs at positions 151, 153, and 154. A compositionally biased stretch (basic and acidic residues) spans 155–167 (KAEDAPAKEEPKQ). Positions 168-199 (ADVPAAVTAAAATTPAAEDAAAKATAQPPTET) are enriched in low complexity. Thr-181 is modified (phosphothreonine). Residues Ser-202 and Ser-203 each carry the phosphoserine; by CK2 modification. Basic and acidic residues predominate over residues 213–225 (DETKPKESARQDE). Positions 226–238 (GKEEEPEADQEHA) are enriched in acidic residues.

It belongs to the neuromodulin family. As to quaternary structure, identified in a complex containing FGFR4, NCAM1, CDH2, PLCG1, FRS2, SRC, SHC1, GAP43 and CTTN. Interacts (via IQ domain) with calmodulin. Binds calmodulin with a greater affinity in the absence of Ca(2+) than in its presence. Phosphorylated. Phosphorylation of this protein by a protein kinase C is specifically correlated with certain forms of synaptic plasticity. In terms of processing, palmitoylated by ZDHHC3. Palmitoylation is regulated by ARF6 and is essential for plasma membrane association and axonal and dendritic filopodia induction. Deacylated by LYPLA2.

The protein localises to the cell membrane. It localises to the cell projection. The protein resides in the growth cone membrane. Its subcellular location is the synapse. It is found in the filopodium membrane. The protein localises to the perikaryon. It localises to the dendrite. The protein resides in the axon. Its subcellular location is the cytoplasm. Functionally, this protein is associated with nerve growth. It is a major component of the motile 'growth cones' that form the tips of elongating axons. Plays a role in axonal and dendritic filopodia induction. The polypeptide is Neuromodulin (GAP43) (Homo sapiens (Human)).